The sequence spans 465 residues: Chromosomal replication initiator protein DnaA (465 aa).

The tract at residues 1-72 (MRTKQLWQVA…ETLSLLLGRP (72 aa)) is domain I, interacts with DnaA modulators. Residues 72-117 (PIAVHFTVHGQDDEEHPVQRRPQRRALASEEGSASKQLSLTPSPEH) are domain II. The interval 80 to 118 (HGQDDEEHPVQRRPQRRALASEEGSASKQLSLTPSPEHG) is disordered. A compositionally biased stretch (polar residues) spans 103-113 (GSASKQLSLTP). The domain III, AAA+ region stretch occupies residues 118–334 (GLNPRYTFEK…GALNRIVALA (217 aa)). Positions 162, 164, 165, and 166 each coordinate ATP. The segment at 335 to 465 (QLTHQPITLA…DAKAPLASRH (131 aa)) is domain IV, binds dsDNA.

It belongs to the DnaA family. Oligomerizes as a right-handed, spiral filament on DNA at oriC.

Its subcellular location is the cytoplasm. In terms of biological role, plays an essential role in the initiation and regulation of chromosomal replication. ATP-DnaA binds to the origin of replication (oriC) to initiate formation of the DNA replication initiation complex once per cell cycle. Binds the DnaA box (a 9 base pair repeat at the origin) and separates the double-stranded (ds)DNA. Forms a right-handed helical filament on oriC DNA; dsDNA binds to the exterior of the filament while single-stranded (ss)DNA is stabiized in the filament's interior. The ATP-DnaA-oriC complex binds and stabilizes one strand of the AT-rich DNA unwinding element (DUE), permitting loading of DNA polymerase. After initiation quickly degrades to an ADP-DnaA complex that is not apt for DNA replication. Binds acidic phospholipids. The chain is Chromosomal replication initiator protein DnaA from Thermomicrobium roseum (strain ATCC 27502 / DSM 5159 / P-2).